A 407-amino-acid chain; its full sequence is Indoleamine 2,3-dioxygenase 2 (407 aa).

Histidine 347 contacts heme.

This sequence belongs to the indoleamine 2,3-dioxygenase family. The cofactor is heme. Detected in liver, small intestine, spleen, placenta, thymus, lung, brain, kidney, and colon. Also expressed at low level in testis and thyroid. Not expressed in the majority of human tumor samples (&gt;99%).

The enzyme catalyses L-tryptophan + O2 = N-formyl-L-kynurenine. Its pathway is amino-acid degradation; L-tryptophan degradation via kynurenine pathway; L-kynurenine from L-tryptophan: step 1/2. Activity is inhibited by D-1MT (1-methyl-D-tryptophan) and MTH-trp (methylthiohydantoin-DL-tryptophan) but not L-1MT (1-methyl-L-tryptophan). Its function is as follows. Catalyzes the first and rate limiting step of the catabolism of the essential amino acid tryptophan along the kynurenine pathway. Involved in immune regulation. May not play a significant role in tryptophan-related tumoral resistance. The protein is Indoleamine 2,3-dioxygenase 2 of Homo sapiens (Human).